Consider the following 428-residue polypeptide: Adenylosuccinate synthetase (428 aa).

Residues 12–18 (GDEGKGK) and 40–42 (GHT) contribute to the GTP site. Residue Asp-13 is the Proton acceptor of the active site. Residues Asp-13 and Gly-40 each contribute to the Mg(2+) site. IMP contacts are provided by residues 13–16 (DEGK), 38–41 (NAGH), Thr-129, Arg-143, Gln-224, Thr-239, and Arg-303. The active-site Proton donor is His-41. Residue 299–305 (VTTGRSR) participates in substrate binding. GTP is bound by residues Arg-305, 331 to 333 (KLD), and 413 to 415 (GVG).

Belongs to the adenylosuccinate synthetase family. As to quaternary structure, homodimer. It depends on Mg(2+) as a cofactor.

It is found in the cytoplasm. The catalysed reaction is IMP + L-aspartate + GTP = N(6)-(1,2-dicarboxyethyl)-AMP + GDP + phosphate + 2 H(+). It functions in the pathway purine metabolism; AMP biosynthesis via de novo pathway; AMP from IMP: step 1/2. In terms of biological role, plays an important role in the de novo pathway of purine nucleotide biosynthesis. Catalyzes the first committed step in the biosynthesis of AMP from IMP. The chain is Adenylosuccinate synthetase from Saccharopolyspora erythraea (strain ATCC 11635 / DSM 40517 / JCM 4748 / NBRC 13426 / NCIMB 8594 / NRRL 2338).